A 1929-amino-acid chain; its full sequence is Intraflagellar transport protein 140 (1929 aa).

WD repeat units follow at residues 76-116 (QVQV…PSYK) and 119-158 (LHQE…YSFE). The interval 774–795 (LSTPDTGSPAVEAEESPQRQTR) is disordered. 3 LRR repeats span residues 957-980 (STSL…TFTK), 1019-1044 (ISLL…SLAE), and 1510-1532 (AQSL…LADI).

Its subcellular location is the cell projection. The protein resides in the cilium. It is found in the flagellum. The protein localises to the cytoplasm. It localises to the cytoskeleton. Its subcellular location is the flagellum axoneme. The protein resides in the flagellum basal body. In terms of biological role, component of the intraflagellar transport complex A (IFT-A) involved in flagellar assembly. The sequence is that of Intraflagellar transport protein 140 from Giardia intestinalis (strain ATCC 50803 / WB clone C6) (Giardia lamblia).